A 250-amino-acid chain; its full sequence is NADH-quinone oxidoreductase subunit C (250 aa).

The interval 193–250 (GMTPPLPGDEKADMPPIDDPMVTEGPEDTGAGARANAKAAEGTPADPPAMDDEEEDDA) is disordered. Positions 222–236 (GAGARANAKAAEGTP) are enriched in low complexity. The segment covering 241–250 (AMDDEEEDDA) has biased composition (acidic residues).

It belongs to the complex I 30 kDa subunit family. In terms of assembly, NDH-1 is composed of 14 different subunits. Subunits NuoB, C, D, E, F, and G constitute the peripheral sector of the complex.

The protein localises to the cell inner membrane. The enzyme catalyses a quinone + NADH + 5 H(+)(in) = a quinol + NAD(+) + 4 H(+)(out). In terms of biological role, NDH-1 shuttles electrons from NADH, via FMN and iron-sulfur (Fe-S) centers, to quinones in the respiratory chain. The immediate electron acceptor for the enzyme in this species is believed to be ubiquinone. Couples the redox reaction to proton translocation (for every two electrons transferred, four hydrogen ions are translocated across the cytoplasmic membrane), and thus conserves the redox energy in a proton gradient. This chain is NADH-quinone oxidoreductase subunit C, found in Erythrobacter litoralis (strain HTCC2594).